The chain runs to 176 residues: Transcription factor E (176 aa).

Residues 8-90 (NDPVIQKYLH…LWTFHYENIP (83 aa)) form the HTH TFE/IIEalpha-type domain.

This sequence belongs to the TFE family. As to quaternary structure, monomer. Interaction with RNA polymerase subunits RpoF and RpoE is necessary for Tfe stimulatory transcription activity. Able to interact with Tbp and RNA polymerase in the absence of DNA promoter. Interacts both with the preinitiation and elongation complexes.

Transcription factor that plays a role in the activation of archaeal genes transcribed by RNA polymerase. Facilitates transcription initiation by enhancing TATA-box recognition by TATA-box-binding protein (Tbp), and transcription factor B (Tfb) and RNA polymerase recruitment. Not absolutely required for transcription in vitro, but particularly important in cases where Tbp or Tfb function is not optimal. It dynamically alters the nucleic acid-binding properties of RNA polymerases by stabilizing the initiation complex and destabilizing elongation complexes. Seems to translocate with the RNA polymerase following initiation and acts by binding to the non template strand of the transcription bubble in elongation complexes. The chain is Transcription factor E from Haloquadratum walsbyi (strain DSM 16790 / HBSQ001).